A 262-amino-acid chain; its full sequence is 1-(5-phosphoribosyl)-5-[(5-phosphoribosylamino)methylideneamino] imidazole-4-carboxamide isomerase (262 aa).

The Proton acceptor role is filled by Asp8. The active-site Proton donor is Asp129. Residues 243–262 are disordered; the sequence is KDNVGQEDHSLPRCEPGPRG.

This sequence belongs to the HisA/HisF family.

It localises to the cytoplasm. The catalysed reaction is 1-(5-phospho-beta-D-ribosyl)-5-[(5-phospho-beta-D-ribosylamino)methylideneamino]imidazole-4-carboxamide = 5-[(5-phospho-1-deoxy-D-ribulos-1-ylimino)methylamino]-1-(5-phospho-beta-D-ribosyl)imidazole-4-carboxamide. It participates in amino-acid biosynthesis; L-histidine biosynthesis; L-histidine from 5-phospho-alpha-D-ribose 1-diphosphate: step 4/9. The chain is 1-(5-phosphoribosyl)-5-[(5-phosphoribosylamino)methylideneamino] imidazole-4-carboxamide isomerase from Desulforudis audaxviator (strain MP104C).